The primary structure comprises 557 residues: Formate--tetrahydrofolate ligase (557 aa).

65-72 (TPAGEGKT) provides a ligand contact to ATP.

This sequence belongs to the formate--tetrahydrofolate ligase family. As to quaternary structure, homotetramer.

The enzyme catalyses (6S)-5,6,7,8-tetrahydrofolate + formate + ATP = (6R)-10-formyltetrahydrofolate + ADP + phosphate. It participates in one-carbon metabolism; tetrahydrofolate interconversion. The polypeptide is Formate--tetrahydrofolate ligase (fhs) (Methylorubrum extorquens (strain ATCC 14718 / DSM 1338 / JCM 2805 / NCIMB 9133 / AM1) (Methylobacterium extorquens)).